We begin with the raw amino-acid sequence, 198 residues long: Glycerol-3-phosphate acyltransferase (198 aa).

The next 6 membrane-spanning stretches (helical) occupy residues 1 to 21 (MNLL…GYLA), 53 to 73 (IIVF…AKYL), 79 to 99 (WQVA…WLNW), 111 to 131 (IFLG…IIMI), 136 to 156 (IVSL…FLSF), and 158 to 178 (GSNI…LVIW).

This sequence belongs to the PlsY family. As to quaternary structure, probably interacts with PlsX.

The protein localises to the cell inner membrane. The enzyme catalyses an acyl phosphate + sn-glycerol 3-phosphate = a 1-acyl-sn-glycero-3-phosphate + phosphate. It functions in the pathway lipid metabolism; phospholipid metabolism. Functionally, catalyzes the transfer of an acyl group from acyl-phosphate (acyl-PO(4)) to glycerol-3-phosphate (G3P) to form lysophosphatidic acid (LPA). This enzyme utilizes acyl-phosphate as fatty acyl donor, but not acyl-CoA or acyl-ACP. The protein is Glycerol-3-phosphate acyltransferase of Prochlorococcus marinus (strain NATL1A).